A 105-amino-acid chain; its full sequence is Toxin ParE2 (105 aa).

Belongs to the RelE toxin family.

Its function is as follows. Toxic component of a type II toxin-antitoxin (TA) system. Its toxic effect is neutralized by coexpression with cognate antitoxin ParD2. The protein is Toxin ParE2 (parE2) of Mycobacterium tuberculosis (strain CDC 1551 / Oshkosh).